Consider the following 189-residue polypeptide: Large ribosomal subunit protein bL9 (189 aa).

The protein belongs to the bacterial ribosomal protein bL9 family.

Its function is as follows. Binds to the 23S rRNA. The protein is Large ribosomal subunit protein bL9 of Methylobacterium nodulans (strain LMG 21967 / CNCM I-2342 / ORS 2060).